A 350-amino-acid polypeptide reads, in one-letter code: Transmembrane protein 185A (350 aa).

The next 7 membrane-spanning stretches (helical) occupy residues leucine 16–isoleucine 36, tryptophan 41–glycine 61, phenylalanine 81–valine 101, phenylalanine 111–valine 131, isoleucine 177–leucine 197, isoleucine 211–leucine 231, and alanine 240–threonine 260. Residues aspartate 298–aspartate 350 form a mediates interaction with MAP1B region.

Belongs to the TMEM185 family. Interacts with MAP1B. As to expression, broadly expressed in brain where it is specifically expressed by neurons (at protein level). Also detected in some cells of arterioles, intestine, lung and testis (at protein level).

The protein localises to the cell projection. It localises to the dendrite. Its subcellular location is the membrane. In Mus musculus (Mouse), this protein is Transmembrane protein 185A (Tmem185a).